Reading from the N-terminus, the 397-residue chain is CCA-adding enzyme (397 aa).

The ATP site is built by glycine 26 and arginine 29. CTP is bound by residues glycine 26 and arginine 29. 2 residues coordinate Mg(2+): aspartate 39 and aspartate 41. ATP contacts are provided by arginine 110, aspartate 153, arginine 156, arginine 159, and arginine 162. Residues arginine 110, aspartate 153, arginine 156, arginine 159, and arginine 162 each coordinate CTP.

Belongs to the tRNA nucleotidyltransferase/poly(A) polymerase family. Bacterial CCA-adding enzyme type 3 subfamily. As to quaternary structure, homodimer. Mg(2+) is required as a cofactor.

It catalyses the reaction a tRNA precursor + 2 CTP + ATP = a tRNA with a 3' CCA end + 3 diphosphate. The enzyme catalyses a tRNA with a 3' CCA end + 2 CTP + ATP = a tRNA with a 3' CCACCA end + 3 diphosphate. Functionally, catalyzes the addition and repair of the essential 3'-terminal CCA sequence in tRNAs without using a nucleic acid template. Adds these three nucleotides in the order of C, C, and A to the tRNA nucleotide-73, using CTP and ATP as substrates and producing inorganic pyrophosphate. tRNA 3'-terminal CCA addition is required both for tRNA processing and repair. Also involved in tRNA surveillance by mediating tandem CCA addition to generate a CCACCA at the 3' terminus of unstable tRNAs. While stable tRNAs receive only 3'-terminal CCA, unstable tRNAs are marked with CCACCA and rapidly degraded. The chain is CCA-adding enzyme from Bacillus cereus (strain B4264).